A 629-amino-acid chain; its full sequence is ATP-dependent RNA helicase DeaD (629 aa).

Residues 6–34 (TTFADLGLKAPILEALNDLGYEKPSPIQA) carry the Q motif motif. The 172-residue stretch at 37–208 (IPHLLNGRDV…RRFMKEPQEV (172 aa)) folds into the Helicase ATP-binding domain. 50–57 (AQTGSGKT) provides a ligand contact to ATP. Positions 156–159 (DEAD) match the DEAD box motif. One can recognise a Helicase C-terminal domain in the interval 232–379 (KNEALVRFLE…EVELPNAELL (148 aa)). 2 disordered regions span residues 438-481 (LIVP…RERR) and 560-629 (LGDA…GGDA). Basic and acidic residues-rich tracts occupy residues 446-481 (MRPK…RERR) and 568-629 (GGER…GGDA).

It belongs to the DEAD box helicase family. DeaD/CsdA subfamily. As to quaternary structure, interacts with the 50S ribosomal subunit upon shifting to 15 degrees Celsius. Also found associated with the RNA degradosome at 15 degrees Celsius; binds RNase E (rne).

It localises to the cytoplasm. The catalysed reaction is ATP + H2O = ADP + phosphate + H(+). In terms of biological role, DEAD-box RNA helicase involved in various cellular processes at low temperature, including ribosome biogenesis, mRNA degradation and translation initiation. Exhibits RNA-stimulated ATP hydrolysis and RNA unwinding activity at low temperature. Involved in 50S ribosomal subunit assembly, acting after SrmB, and could also play a role in the biogenesis of the 30S ribosomal subunit. In addition, is involved in mRNA decay, via formation of a cold-shock degradosome with RNase E. Also stimulates translation of some mRNAs, probably at the level of initiation. The protein is ATP-dependent RNA helicase DeaD of Escherichia coli (strain K12).